The following is a 107-amino-acid chain: Endonuclease ALBA3 (107 aa).

Residues K23 and K32 each carry the N6-acetyllysine modification.

It belongs to the histone-like Alba family. As to quaternary structure, homodimer. Interacts (acetylated and unacetylated) with Sir2A. It depends on a divalent metal cation as a cofactor. Post-translationally, acetylated. Exists in both acetylated and unacetylated forms but predominantly in an acetylated form. Deacetylated by Sir2A.

The protein localises to the nucleus. The protein resides in the chromosome. It is found in the telomere. It localises to the cytoplasm. Its activity is regulated as follows. Mild acetylation lowers protein interaction with DNA and high acetylation abolishes DNA-binding activity. DNA binding and endonuclease activity is modulated via deacetylation of Lys-23 by Sir2A. Inhibited in the presence of EDTA and EGTA. Possesses DNA-binding and endonuclease activities. Binds DNA cooperatively in sequence-independent manner at the DNA minor groove. Exhibits apurinic/apyrimidinic site-driven endonuclease activity. Binds RNA; shows high affinity for poly(A) and a lower affinity for poly(U) templates. In vitro, prevents transcription after DNA binding. Associates with the telomeric region, the subtelomeric TARE6 repeat sequence and the var gene promoters. The chain is Endonuclease ALBA3 from Plasmodium falciparum (isolate 3D7).